We begin with the raw amino-acid sequence, 460 residues long: Fumarate hydratase class II (460 aa).

Residues 95–97 (SGT), 126–129 (HPND), 136–138 (SSN), and T184 contribute to the substrate site. H185 serves as the catalytic Proton donor/acceptor. S315 is an active-site residue. Residues S316 and 321 to 323 (KIN) each bind substrate.

It belongs to the class-II fumarase/aspartase family. Fumarase subfamily. Homotetramer.

The protein localises to the cytoplasm. It catalyses the reaction (S)-malate = fumarate + H2O. It functions in the pathway carbohydrate metabolism; tricarboxylic acid cycle; (S)-malate from fumarate: step 1/1. Its function is as follows. Involved in the TCA cycle. Catalyzes the stereospecific interconversion of fumarate to L-malate. This Chlamydia caviae (strain ATCC VR-813 / DSM 19441 / 03DC25 / GPIC) (Chlamydophila caviae) protein is Fumarate hydratase class II.